The following is a 294-amino-acid chain: Elongation factor Ts, mitochondrial 2 (294 aa).

It belongs to the EF-Ts family.

The protein resides in the mitochondrion. Its function is as follows. Associates with the EF-Tu.GDP complex and induces the exchange of GDP to GTP. It remains bound to the aminoacyl-tRNA.EF-Tu.GTP complex up to the GTP hydrolysis stage on the ribosome. This is Elongation factor Ts, mitochondrial 2 from Paramecium tetraurelia.